The following is a 670-amino-acid chain: DNA ligase (670 aa).

Residues 34–38, 83–84, and glutamate 113 contribute to the NAD(+) site; these read DFEFD and SL. Lysine 115 serves as the catalytic N6-AMP-lysine intermediate. Positions 136, 173, 288, and 312 each coordinate NAD(+). Residues cysteine 406, cysteine 409, cysteine 424, and cysteine 430 each coordinate Zn(2+). The 80-residue stretch at 591–670 folds into the BRCT domain; that stretch reads PESDKFAGKS…EAEFISLLNS (80 aa).

Belongs to the NAD-dependent DNA ligase family. LigA subfamily. It depends on Mg(2+) as a cofactor. Mn(2+) serves as cofactor.

It carries out the reaction NAD(+) + (deoxyribonucleotide)n-3'-hydroxyl + 5'-phospho-(deoxyribonucleotide)m = (deoxyribonucleotide)n+m + AMP + beta-nicotinamide D-nucleotide.. Functionally, DNA ligase that catalyzes the formation of phosphodiester linkages between 5'-phosphoryl and 3'-hydroxyl groups in double-stranded DNA using NAD as a coenzyme and as the energy source for the reaction. It is essential for DNA replication and repair of damaged DNA. The protein is DNA ligase of Cytophaga hutchinsonii (strain ATCC 33406 / DSM 1761 / CIP 103989 / NBRC 15051 / NCIMB 9469 / D465).